The following is a 321-amino-acid chain: AA9 family lytic polysaccharide monooxygenase A (321 aa).

The signal sequence occupies residues 1–21; that stretch reads MFRAQSFLPVLALVLRVAAHG. H20 is a Cu(2+) binding site. C71 and C197 are joined by a disulfide. N-linked (GlcNAc...) asparagine glycosylation is present at N72. H105 provides a ligand contact to Cu(2+). A glycan (N-linked (GlcNAc...) asparagine) is linked at N157. Residues H183 and Q192 each coordinate O2. Y194 provides a ligand contact to Cu(2+). Positions 278–306 are disordered; sequence SSSAAATQSSSAAPSSSAIGTSTASSAAA. S293 carries the GPI-anchor amidated serine lipid modification. A propeptide spans 294–321 (removed in mature form); the sequence is SAIGTSTASSAAASGTAIVDANTCMNSA.

It belongs to the polysaccharide monooxygenase AA9 family. The cofactor is Cu(2+).

Its subcellular location is the cell membrane. It catalyses the reaction [(1-&gt;4)-beta-D-glucosyl]n+m + reduced acceptor + O2 = 4-dehydro-beta-D-glucosyl-[(1-&gt;4)-beta-D-glucosyl]n-1 + [(1-&gt;4)-beta-D-glucosyl]m + acceptor + H2O.. Lytic polysaccharide monooxygenase (LPMO) that depolymerizes crystalline and amorphous polysaccharides via the oxidation of scissile alpha- or beta-(1-4)-glycosidic bonds, yielding C1 or C4 oxidation products. Catalysis by LPMOs requires the reduction of the active-site copper from Cu(II) to Cu(I) by a reducing agent and H(2)O(2) or O(2) as a cosubstrate. Has broad specificity, cleaving at any position along the beta-glucan backbone of xyloglucan, regardless of substitutions. Shows minor activity on glucomannan. The sequence is that of AA9 family lytic polysaccharide monooxygenase A from Gloeophyllum trabeum (strain ATCC 11539 / FP-39264 / Madison 617) (Brown rot fungus).